Consider the following 629-residue polypeptide: DNA mismatch repair protein MutL (629 aa).

It belongs to the DNA mismatch repair MutL/HexB family.

Functionally, this protein is involved in the repair of mismatches in DNA. It is required for dam-dependent methyl-directed DNA mismatch repair. May act as a 'molecular matchmaker', a protein that promotes the formation of a stable complex between two or more DNA-binding proteins in an ATP-dependent manner without itself being part of a final effector complex. In Haemophilus influenzae (strain PittGG), this protein is DNA mismatch repair protein MutL.